The following is a 901-amino-acid chain: Protein translocase subunit SecA (901 aa).

ATP contacts are provided by residues Gln85, 103-107 (GEGKT), and Asp510. The tract at residues 848–901 (RINQNNLPVDENSQTTQNSETEDYSDRRIGRNEPCPCGSGKKYKHCHGSRVARQ) is disordered. Positions 849–866 (INQNNLPVDENSQTTQNS) are enriched in polar residues. Cys882, Cys884, Cys893, and His894 together coordinate Zn(2+). A compositionally biased stretch (basic residues) spans 888-901 (KKYKHCHGSRVARQ).

Belongs to the SecA family. In terms of assembly, monomer and homodimer. Part of the essential Sec protein translocation apparatus which comprises SecA, SecYEG and auxiliary proteins SecDF-YajC and YidC. Forms a complex with SecB. Zn(2+) serves as cofactor.

The protein localises to the cell inner membrane. Its subcellular location is the cytoplasm. The enzyme catalyses ATP + H2O + cellular proteinSide 1 = ADP + phosphate + cellular proteinSide 2.. Its function is as follows. Part of the Sec protein translocase complex. Interacts with the SecYEG preprotein conducting channel. Has a central role in coupling the hydrolysis of ATP to the transfer of proteins into and across the cell membrane, serving both as a receptor for the preprotein-SecB complex and as an ATP-driven molecular motor driving the stepwise translocation of polypeptide chains across the membrane. This Haemophilus influenzae (strain ATCC 51907 / DSM 11121 / KW20 / Rd) protein is Protein translocase subunit SecA.